Here is a 428-residue protein sequence, read N- to C-terminus: Enolase (428 aa).

Residue Gln-163 participates in (2R)-2-phosphoglycerate binding. Glu-205 serves as the catalytic Proton donor. Mg(2+) is bound by residues Asp-242, Glu-286, and Asp-313. Residues Lys-338, Arg-367, Ser-368, and Lys-389 each coordinate (2R)-2-phosphoglycerate. Lys-338 (proton acceptor) is an active-site residue.

This sequence belongs to the enolase family. Mg(2+) is required as a cofactor.

The protein resides in the cytoplasm. It localises to the secreted. Its subcellular location is the cell surface. The catalysed reaction is (2R)-2-phosphoglycerate = phosphoenolpyruvate + H2O. Its pathway is carbohydrate degradation; glycolysis; pyruvate from D-glyceraldehyde 3-phosphate: step 4/5. In terms of biological role, catalyzes the reversible conversion of 2-phosphoglycerate (2-PG) into phosphoenolpyruvate (PEP). It is essential for the degradation of carbohydrates via glycolysis. The protein is Enolase of Acidovorax ebreus (strain TPSY) (Diaphorobacter sp. (strain TPSY)).